The following is a 368-amino-acid chain: UPF0284 protein Cyan7425_0342 (368 aa).

It belongs to the UPF0284 family.

This Cyanothece sp. (strain PCC 7425 / ATCC 29141) protein is UPF0284 protein Cyan7425_0342.